The chain runs to 715 residues: MSMFNKVVKEFQWGQHKVRLETGEVARQASGAVIVDVEDTVVLATVVGAKSAKPGQDFFPLTVDYLEKTYSAGKIPGGFFRREGRPSEHETLTSRLIDRPLRPLFPEGFYNEVQVVIHVLSVNPEIPADIPALIGASAALAVSGLPFNGPVGAARVAYIDNAYVLNPTRDQLKASSLDLVVAGTERAVLMVESEADQLSEEVMLGAVVFGHEQMQIAIDAIHELVRDGGKPEWDWQPAPKNEALIARVTELAQNDLLAAYQLRDKQARSAKLKEVYAATSAKLEEDALAAGTVAADKATVGNVLFDIEAKIVRSQILNGEPRIDGRDTRTVRPIEIRTGVLPRTHGSALFTRGETQALVVATLGTKGDEQIIDALEGEYRERFMLHYNMPPFATGETGRVGSPKRREIGHGRLAKRALVKCLPSADEFGYSIRVVSEITESNGSSSMASVCGGCLALMDAGVPMKAHVAGIAMGLILEGNKFAVLTDILGDEDHLGDMDFKVAGTEQGVTALQMDIKIQGITKEIMQVALAQAKEGRLHILGKMTSAVSGANTQLSEFAPRMITVKINPEKIRDVIGKGGSVIRALTEETGTTIDISDDGVVTIASTSSEGMAEAKKRIEQITAEIEVGQVYEGTVLKLLDFGAIVNLLPGKDGLLHISEIVNERVKDINDYLKEGQQVKVKVIQTDEKGRVRLSAKALLNEAAAAAQSDTPPQQ.

Residues D493 and D499 each contribute to the Mg(2+) site. In terms of domain architecture, KH spans 560–619 (PRMITVKINPEKIRDVIGKGGSVIRALTEETGTTIDISDDGVVTIASTSSEGMAEAKKRI). An S1 motif domain is found at 629–697 (GQVYEGTVLK…EKGRVRLSAK (69 aa)).

Belongs to the polyribonucleotide nucleotidyltransferase family. Mg(2+) is required as a cofactor.

Its subcellular location is the cytoplasm. It catalyses the reaction RNA(n+1) + phosphate = RNA(n) + a ribonucleoside 5'-diphosphate. Functionally, involved in mRNA degradation. Catalyzes the phosphorolysis of single-stranded polyribonucleotides processively in the 3'- to 5'-direction. The polypeptide is Polyribonucleotide nucleotidyltransferase (Burkholderia cenocepacia (strain HI2424)).